The following is a 317-amino-acid chain: uncharacterized protein (317 aa).

The next 6 helical transmembrane spans lie at 14-34 (IPLLSNDLISMLSGGVAATVS), 72-92 (LIGFFRGNGTNCLRAFPYGAV), 119-139 (LLFGAIAGAASCATTYPLDIA), 196-216 (TLLNVVPYVSICFFTFEFCKQ), 230-250 (LFLGGFTGIIGQTLTFPADVL), and 291-307 (SNMLKIIPVMSITWYTY). Solcar repeat units follow at residues 18–103 (SNDL…LKQR), 113–217 (LENH…CKQK), and 224–313 (LTAF…VSKM).

The protein belongs to the mitochondrial carrier (TC 2.A.29) family.

It is found in the mitochondrion inner membrane. This is an uncharacterized protein from Schizosaccharomyces pombe (strain 972 / ATCC 24843) (Fission yeast).